Here is a 215-residue protein sequence, read N- to C-terminus: Deoxyribose-phosphate aldolase (215 aa).

Asp89 functions as the Proton donor/acceptor in the catalytic mechanism. Catalysis depends on Lys153, which acts as the Schiff-base intermediate with acetaldehyde. The Proton donor/acceptor role is filled by Lys182.

It belongs to the DeoC/FbaB aldolase family. DeoC type 1 subfamily.

It localises to the cytoplasm. The catalysed reaction is 2-deoxy-D-ribose 5-phosphate = D-glyceraldehyde 3-phosphate + acetaldehyde. It functions in the pathway carbohydrate degradation; 2-deoxy-D-ribose 1-phosphate degradation; D-glyceraldehyde 3-phosphate and acetaldehyde from 2-deoxy-alpha-D-ribose 1-phosphate: step 2/2. Its function is as follows. Catalyzes a reversible aldol reaction between acetaldehyde and D-glyceraldehyde 3-phosphate to generate 2-deoxy-D-ribose 5-phosphate. The chain is Deoxyribose-phosphate aldolase from Lactiplantibacillus plantarum (strain ATCC BAA-793 / NCIMB 8826 / WCFS1) (Lactobacillus plantarum).